Reading from the N-terminus, the 229-residue chain is Large ribosomal subunit protein uL1 (229 aa).

It belongs to the universal ribosomal protein uL1 family. In terms of assembly, part of the 50S ribosomal subunit.

Binds directly to 23S rRNA. The L1 stalk is quite mobile in the ribosome, and is involved in E site tRNA release. Functionally, protein L1 is also a translational repressor protein, it controls the translation of the L11 operon by binding to its mRNA. The protein is Large ribosomal subunit protein uL1 of Mycoplasmopsis pulmonis (strain UAB CTIP) (Mycoplasma pulmonis).